The following is a 188-amino-acid chain: Selenoprotein S B (188 aa).

A helical transmembrane segment spans residues 29–49 (EALSNYGWYILLGCIVIYFLI). The segment covering 116–125 (TWDRMQEGKS) has biased composition (basic and acidic residues). Positions 116 to 188 (TWDRMQEGKS…RGPSSGGSUG (73 aa)) are disordered. Over residues 136 to 147 (ASPRTSTSSSAP) the composition is skewed to low complexity. A non-standard amino acid (selenocysteine) is located at residue Sec187.

It belongs to the selenoprotein S family.

The protein resides in the endoplasmic reticulum membrane. It is found in the cytoplasm. Its function is as follows. Involved in the degradation process of misfolded endoplasmic reticulum (ER) luminal proteins. Participates in the transfer of misfolded proteins from the ER to the cytosol, where they are destroyed by the proteasome in a ubiquitin-dependent manner. This chain is Selenoprotein S B (vimp-b), found in Xenopus laevis (African clawed frog).